A 396-amino-acid chain; its full sequence is Proteasome-activating nucleotidase (396 aa).

Residues 16 to 57 adopt a coiled-coil conformation; sequence VTYLKRRIRQLELQVRMLEADKERLERELSRLRSEMSRLRQP. Residues 181 to 186 and His-320 each bind ATP; that span reads GCGKTL. The tract at residues 394 to 396 is docks into pockets in the proteasome alpha-ring to cause gate opening; sequence IYG.

It belongs to the AAA ATPase family. In terms of assembly, homohexamer. The hexameric complex has a two-ring architecture resembling a top hat that caps the 20S proteasome core at one or both ends. Upon ATP-binding, the C-terminus of PAN interacts with the alpha-rings of the proteasome core by binding to the intersubunit pockets.

It localises to the cytoplasm. In terms of biological role, ATPase which is responsible for recognizing, binding, unfolding and translocation of substrate proteins into the archaeal 20S proteasome core particle. Is essential for opening the gate of the 20S proteasome via an interaction with its C-terminus, thereby allowing substrate entry and access to the site of proteolysis. Thus, the C-termini of the proteasomal ATPase function like a 'key in a lock' to induce gate opening and therefore regulate proteolysis. Unfolding activity requires energy from ATP hydrolysis, whereas ATP binding alone promotes ATPase-20S proteasome association which triggers gate opening, and supports translocation of unfolded substrates. The chain is Proteasome-activating nucleotidase from Pyrococcus furiosus (strain ATCC 43587 / DSM 3638 / JCM 8422 / Vc1).